Here is a 190-residue protein sequence, read N- to C-terminus: Potassium-transporting ATPase KdpC subunit (190 aa).

A helical membrane pass occupies residues 10 to 30 (TFIFLLLITGGVYPLLTTVLG).

This sequence belongs to the KdpC family. In terms of assembly, the system is composed of three essential subunits: KdpA, KdpB and KdpC.

The protein localises to the cell inner membrane. Functionally, part of the high-affinity ATP-driven potassium transport (or Kdp) system, which catalyzes the hydrolysis of ATP coupled with the electrogenic transport of potassium into the cytoplasm. This subunit acts as a catalytic chaperone that increases the ATP-binding affinity of the ATP-hydrolyzing subunit KdpB by the formation of a transient KdpB/KdpC/ATP ternary complex. The sequence is that of Potassium-transporting ATPase KdpC subunit from Escherichia coli (strain 55989 / EAEC).